Consider the following 363-residue polypeptide: 3-isopropylmalate dehydrogenase (363 aa).

Residue Gly78–Glu91 coordinates NAD(+). Substrate is bound by residues Arg99, Arg109, Arg138, and Asp227. Positions 227, 251, and 255 each coordinate Mg(2+). Residue Gly285 to Asn297 participates in NAD(+) binding.

Belongs to the isocitrate and isopropylmalate dehydrogenases family. LeuB type 1 subfamily. As to quaternary structure, homodimer. Requires Mg(2+) as cofactor. Mn(2+) is required as a cofactor.

The protein resides in the cytoplasm. It catalyses the reaction (2R,3S)-3-isopropylmalate + NAD(+) = 4-methyl-2-oxopentanoate + CO2 + NADH. It participates in amino-acid biosynthesis; L-leucine biosynthesis; L-leucine from 3-methyl-2-oxobutanoate: step 3/4. In terms of biological role, catalyzes the oxidation of 3-carboxy-2-hydroxy-4-methylpentanoate (3-isopropylmalate) to 3-carboxy-4-methyl-2-oxopentanoate. The product decarboxylates to 4-methyl-2 oxopentanoate. The sequence is that of 3-isopropylmalate dehydrogenase from Buchnera aphidicola subsp. Schizaphis graminum (strain Sg).